A 318-amino-acid chain; its full sequence is MTGMRIVFMGTPEFACPTLRTLIERGEKVVAVVTQPDRPKGRGQQTLPPPVKVVAEQHGIPVLQPVKVRLPESIEEIRGLNPDLIVVIAFGQILPKALLDIPKYGCINVHASLLPRYRGAAPLNWCIINGENETGVTTMMMDVGLDTGDMLLKRSTPIGADEDTQSLHDRMSQLGAELLAETLDRLARGELVPEKQDDALTCYAPMMKKEDGLIDWSRDAQAIKNQVRGMTPWPGAYSFLDDKLLKVFRVQTASGSGAPGEILSCGRDGIEVACGTGSLVIAELQLEGKKRLPAGDFLAGYKLQPGGLLGKKDASVGV.

Residue 112-115 (SLLP) participates in (6S)-5,6,7,8-tetrahydrofolate binding.

It belongs to the Fmt family.

The enzyme catalyses L-methionyl-tRNA(fMet) + (6R)-10-formyltetrahydrofolate = N-formyl-L-methionyl-tRNA(fMet) + (6S)-5,6,7,8-tetrahydrofolate + H(+). Its function is as follows. Attaches a formyl group to the free amino group of methionyl-tRNA(fMet). The formyl group appears to play a dual role in the initiator identity of N-formylmethionyl-tRNA by promoting its recognition by IF2 and preventing the misappropriation of this tRNA by the elongation apparatus. The protein is Methionyl-tRNA formyltransferase of Citrifermentans bemidjiense (strain ATCC BAA-1014 / DSM 16622 / JCM 12645 / Bem) (Geobacter bemidjiensis).